Reading from the N-terminus, the 685-residue chain is Exocyst complex component 8 (685 aa).

The 101-residue stretch at 151-251 folds into the PH domain; that stretch reads YLVYNGDLTE…WLEILEQTKK (101 aa). The span at 254 to 263 shows a compositional bias: basic and acidic residues; sequence ALNEKQKQEE. Residues 254-273 are disordered; it reads ALNEKQKQEETTPQLPVVPE.

Belongs to the EXO84 family. In terms of assembly, the exocyst complex is composed of exoc1, exoc2, exoc3, exoc4, exoc5, exoc6, exoc7 and exoc8.

It is found in the cytoplasm. The protein localises to the perinuclear region. It localises to the cell projection. Its subcellular location is the growth cone. Component of the exocyst complex involved in the docking of exocytic vesicles with fusion sites on the plasma membrane. The protein is Exocyst complex component 8 (exoc8) of Xenopus laevis (African clawed frog).